The primary structure comprises 915 residues: MSEGNDQDAGKGRLSLRPAGRMELGRTVDAGSVRQSFSHGRSKVVQVEVRKKRGLQPGTPSAPEGGSSSAPAPQSGNAPQGTPRSGGGNRGSGRGGAGGAGRALTAQELAIRQRVLEQQRVEAARREVERREQEKISILSAAEEARRREEEAKRAAEEEARRKEQEEADRIAAEAARKAAESAPPAEAPPVPPPAQRERTAAPSSRSAPSRTAPSDDIRRPSRPAPIPSKVPVAAPSAPQTLRLRERGDEGEEERKPRRAGGGGAPAPRKAAAPVAKKAVAEPRRGGRIDVRAAIEGEDERTRSIASMRRQRDRERRQAELERLRADQLKVVRDVVLPETIAVGELANRMAVRAADVIKQLMRMGMMATVTQTIDADTAELVVQEFGHRVRRVSESDVEVGLEGISDIDSDLQPRPPVVTVMGHVDHGKTSLLDALRATDVAAGEAGGITQHIGAYQVTLPSRQKLTFLDTPGHEAFTAMRSRGASVTDIVVLVVAADDGVMPQTIEAIKHAKAANAPIIVAINKCDKPGANPGRVRQELLHHEIVVEDMGGDTQDVEVSALKRQNLDKLEEAILLQAEVLDLKANPDRAAEGTVVESRLDRGRGPVATVLVQKGTLRQGDIVVAGAEWGRVRAMLDDKGQQMKEALPSTPVEILGLAGVPSAGEPFVAVENESRAREISEFRQRKIREKMAAGIAAGRGTLEQMLSRIQAGAQKEVAVVIKADVQGSAEAIATTVQKQEHEEVKVRTLLSSVGQISESDVQLAKASNAVLIAFNVRATNQARELAQREGVDIRYYSIIYEVADDIEALVRGKIAPKQREKFLGYAEIRKVFEITKVGKVAGCMVTEGVVKRGCGVRLLRDNVVIHTGELSQLKRFKDDVKEVARNYECGLSFAGYNDIKEGDVVECYETELVPA.

Disordered regions lie at residues methionine 1 to threonine 105 and valine 121 to isoleucine 295. The span at proline 57 to glycine 81 shows a compositional bias: low complexity. The span at arginine 84–glycine 101 shows a compositional bias: gly residues. Composition is skewed to basic and acidic residues over residues valine 121–lysine 135 and glutamate 143–alanine 180. Positions alanine 186–alanine 195 are enriched in pro residues. Composition is skewed to low complexity over residues alanine 201–alanine 213 and lysine 230–proline 239. The span at arginine 243–lysine 256 shows a compositional bias: basic and acidic residues. Residues proline 266–lysine 278 are compositionally biased toward low complexity. Residues alanine 279–isoleucine 295 are compositionally biased toward basic and acidic residues. The region spanning proline 414–lysine 584 is the tr-type G domain. The segment at glycine 423–threonine 430 is G1. Glycine 423–threonine 430 provides a ligand contact to GTP. The interval glycine 448 to histidine 452 is G2. Residues aspartate 470 to glycine 473 form a G3 region. GTP is bound by residues aspartate 470–histidine 474 and asparagine 524–aspartate 527. The tract at residues asparagine 524–aspartate 527 is G4. The tract at residues serine 560–leucine 562 is G5.

This sequence belongs to the TRAFAC class translation factor GTPase superfamily. Classic translation factor GTPase family. IF-2 subfamily.

Its subcellular location is the cytoplasm. One of the essential components for the initiation of protein synthesis. Protects formylmethionyl-tRNA from spontaneous hydrolysis and promotes its binding to the 30S ribosomal subunits. Also involved in the hydrolysis of GTP during the formation of the 70S ribosomal complex. This chain is Translation initiation factor IF-2, found in Granulibacter bethesdensis (strain ATCC BAA-1260 / CGDNIH1).